The sequence spans 563 residues: Choline transporter (563 aa).

A disordered region spans residues Met1–Lys25. Residues Met1–Ser57 are Extracellular-facing. Residues Asn7 and Asn20 are each glycosylated (N-linked (GlcNAc...) asparagine). Residues Ser22 and Ser42 each carry the phosphoserine modification. A helical membrane pass occupies residues Phe58 to Ser78. At Thr79–Ser87 the chain is on the cytoplasmic side. Residues Gly88–Gly108 form a helical membrane-spanning segment. Over Thr109–Arg182 the chain is Extracellular. Residues Trp183–Gly203 traverse the membrane as a helical segment. Topologically, residues Lys204–Ser205 are cytoplasmic. The helical transmembrane segment at Leu206–Ile226 threads the bilayer. Residues Thr227–Gly255 lie on the Extracellular side of the membrane. Asn248 carries an N-linked (GlcNAc...) asparagine glycan. The chain crosses the membrane as a helical span at residues Gly256–Ala276. At Thr277–Ala293 the chain is on the cytoplasmic side. Residues Ile294–Phe314 traverse the membrane as a helical segment. Residues Ser315 to Lys342 lie on the Extracellular side of the membrane. An N-linked (GlcNAc...) asparagine glycan is attached at Asn341. The chain crosses the membrane as a helical span at residues Ser343–Cys363. The Cytoplasmic portion of the chain corresponds to His364 to Asn398. Residues Ala399 to Ser417 traverse the membrane as a helical segment. The Extracellular portion of the chain corresponds to Ser418–Thr426. A helical membrane pass occupies residues Gly427–Ala445. The Cytoplasmic segment spans residues Lys446–Asn465. A helical membrane pass occupies residues Ile466–Pro486. The Extracellular segment spans residues Val487–Asn491. A helical transmembrane segment spans residues Met492–Tyr512. At Lys513–Lys563 the chain is on the cytoplasmic side.

The protein belongs to the amino acid-polyamine-organocation (APC) superfamily. Amino acid/choline transporter (ACT) (TC 2.A.3.4) family.

Its subcellular location is the membrane. The enzyme catalyses choline(out) = choline(in). The catalysed reaction is ethanolamine(in) = ethanolamine(out). Functionally, sole choline transporter in yeast. Also transports ethanolamine. In Saccharomyces cerevisiae (strain ATCC 204508 / S288c) (Baker's yeast), this protein is Choline transporter (HNM1).